Reading from the N-terminus, the 494-residue chain is Zinc metalloproteinase/disintegrin (494 aa).

Residues 1–20 (MIQVLLVTICLAVFPFQGSS) form the signal peptide. Positions 21-193 (KTLKSGNVND…KKASHLVATS (173 aa)) are excised as a propeptide. The Peptidase M12B domain maps to 201-396 (RYVQLVIVAD…HNPPCILNQA (196 aa)). Intrachain disulfides connect Cys311-Cys391, Cys351-Cys375, and Cys353-Cys358. His336 contributes to the Zn(2+) binding site. Glu337 is an active-site residue. 2 residues coordinate Zn(2+): His340 and His346. The propeptide occupies 410–431 (ELLQNSVNPCYDPVTCQPKEKE). In terms of domain architecture, Disintegrin spans 417 to 478 (NPCYDPVTCQ…DCPRNPYKGE (62 aa)). 4 disulfides stabilise this stretch: Cys433/Cys442, Cys438/Cys463, Cys439/Cys468, and Cys451/Cys470. The Cell attachment site signature appears at 455 to 457 (RGD). The propeptide occupies 482–494 (MEWPAPAKGSVLM).

This sequence belongs to the venom metalloproteinase (M12B) family. P-II subfamily. P-IIa sub-subfamily. As to quaternary structure, monomer (disintegrin). Expressed by the venom gland.

Its subcellular location is the secreted. Functionally, impairs hemostasis in the envenomed animal. Its function is as follows. Inhibits ADP-induced platelet aggregation (IC(50)=168 nM). Inhibits alpha-5/beta-1 (ITGA5/ITGB1) integrin and induces the expression of a ligand-induced binding site epitope on beta-1 integrin subunit. Has a direct chemotactic stimulus on human neutrophils in vitro. The polypeptide is Zinc metalloproteinase/disintegrin (Echis ocellatus (Ocellated saw-scaled viper)).